Reading from the N-terminus, the 239-residue chain is Ribonuclease 3 (239 aa).

The 123-residue stretch at 11 to 133 folds into the RNase III domain; that stretch reads HTAIQKKLGY…MFAAVSFDAD (123 aa). Glu-46 serves as a coordination point for Mg(2+). Residue Asp-50 is part of the active site. Mg(2+)-binding residues include Asp-119 and Glu-122. Glu-122 is a catalytic residue. Residues 160 to 230 form the DRBM domain; it reads DGKTALQEAL…AKEALKWLEE (71 aa).

It belongs to the ribonuclease III family. Homodimer. Mg(2+) is required as a cofactor.

It localises to the cytoplasm. The enzyme catalyses Endonucleolytic cleavage to 5'-phosphomonoester.. In terms of biological role, digests double-stranded RNA. Involved in the processing of primary rRNA transcript to yield the immediate precursors to the large and small rRNAs (23S and 16S). Processes some mRNAs, and tRNAs when they are encoded in the rRNA operon. Processes pre-crRNA and tracrRNA of type II CRISPR loci if present in the organism. This Neisseria gonorrhoeae (strain NCCP11945) protein is Ribonuclease 3.